The following is a 132-amino-acid chain: ATP synthase epsilon chain (132 aa).

It belongs to the ATPase epsilon chain family. In terms of assembly, F-type ATPases have 2 components, CF(1) - the catalytic core - and CF(0) - the membrane proton channel. CF(1) has five subunits: alpha(3), beta(3), gamma(1), delta(1), epsilon(1). CF(0) has three main subunits: a, b and c.

It is found in the cell membrane. Its function is as follows. Produces ATP from ADP in the presence of a proton gradient across the membrane. The polypeptide is ATP synthase epsilon chain (atpC) (Bacillus sp. (strain PS3)).